Consider the following 157-residue polypeptide: Small ribosomal subunit protein uS7 (157 aa).

It belongs to the universal ribosomal protein uS7 family. As to quaternary structure, part of the 30S ribosomal subunit. Contacts proteins S9 and S11.

Its function is as follows. One of the primary rRNA binding proteins, it binds directly to 16S rRNA where it nucleates assembly of the head domain of the 30S subunit. Is located at the subunit interface close to the decoding center, probably blocks exit of the E-site tRNA. This is Small ribosomal subunit protein uS7 from Caldicellulosiruptor bescii (strain ATCC BAA-1888 / DSM 6725 / KCTC 15123 / Z-1320) (Anaerocellum thermophilum).